Reading from the N-terminus, the 1186-residue chain is Major DNA-binding protein (1186 aa).

A zinc finger lies at 495-508 (CCLCSLDNRHSCAH). Residues 839–840 (FW) carry the Required for filament formation motif. The interval 1160–1186 (RRRPLACSDLFGDAPAEKRNDLTLDML) is required for nuclear localization.

The protein belongs to the herpesviridae major DNA-binding protein family. Homooligomers. Forms double-helical filaments necessary for the formation of replication compartments within the host nucleus. Interacts with the origin-binding protein. Interacts with the helicase primase complex; this interaction stimulates primer synthesis activity of the helicase-primase complex. Interacts with the DNA polymerase. Interacts with the alkaline exonuclease; this interaction increases its nuclease processivity.

The protein localises to the host nucleus. Plays several crucial roles in viral infection. Participates in the opening of the viral DNA origin to initiate replication by interacting with the origin-binding protein. May disrupt loops, hairpins and other secondary structures present on ssDNA to reduce and eliminate pausing of viral DNA polymerase at specific sites during elongation. Promotes viral DNA recombination by performing strand-transfer, characterized by the ability to transfer a DNA strand from a linear duplex to a complementary single-stranded DNA circle. Can also catalyze the renaturation of complementary single strands. Additionally, reorganizes the host cell nucleus, leading to the formation of prereplicative sites and replication compartments. This process is driven by the protein which can form double-helical filaments in the absence of DNA. The protein is Major DNA-binding protein of Bovine herpesvirus 2 (strain BMV) (BoHV-2).